The sequence spans 332 residues: 5-dehydro-2-deoxygluconokinase (332 aa).

This sequence belongs to the carbohydrate kinase PfkB family.

It catalyses the reaction 5-dehydro-2-deoxy-D-gluconate + ATP = 6-phospho-5-dehydro-2-deoxy-D-gluconate + ADP + H(+). It functions in the pathway polyol metabolism; myo-inositol degradation into acetyl-CoA; acetyl-CoA from myo-inositol: step 5/7. Functionally, catalyzes the phosphorylation of 5-dehydro-2-deoxy-D-gluconate (2-deoxy-5-keto-D-gluconate or DKG) to 6-phospho-5-dehydro-2-deoxy-D-gluconate (DKGP). The sequence is that of 5-dehydro-2-deoxygluconokinase from Bacillus thuringiensis (strain Al Hakam).